The chain runs to 369 residues: 4-hydroxy-3-methylbut-2-en-1-yl diphosphate synthase (flavodoxin) (369 aa).

Residues cysteine 270, cysteine 273, cysteine 305, and glutamate 312 each contribute to the [4Fe-4S] cluster site.

It belongs to the IspG family. The cofactor is [4Fe-4S] cluster.

The catalysed reaction is (2E)-4-hydroxy-3-methylbut-2-enyl diphosphate + oxidized [flavodoxin] + H2O + 2 H(+) = 2-C-methyl-D-erythritol 2,4-cyclic diphosphate + reduced [flavodoxin]. The protein operates within isoprenoid biosynthesis; isopentenyl diphosphate biosynthesis via DXP pathway; isopentenyl diphosphate from 1-deoxy-D-xylulose 5-phosphate: step 5/6. Converts 2C-methyl-D-erythritol 2,4-cyclodiphosphate (ME-2,4cPP) into 1-hydroxy-2-methyl-2-(E)-butenyl 4-diphosphate. This is 4-hydroxy-3-methylbut-2-en-1-yl diphosphate synthase (flavodoxin) from Psychromonas ingrahamii (strain DSM 17664 / CCUG 51855 / 37).